The following is a 389-amino-acid chain: MLQESIKKLVQYGIDMGLTPECERIYTTNLLLECMKEDEYIDPDCDLSNIILEDVLKELLDEAVNRGIIEDSVTHRDLFDTKLMNQLCPRPKQVIDDFNRIYDNHGPIAATDYFYKLSKASDYIRTYRVKKDLKWTCDTEYGTLDITINLSKPEKDPKAIAAAKNAKQSTYPKCQLCMENEGYAGRINHPARENHRIIPITINNSNWGFQYSPYVYYNEHCIVFNGEHTPMKIERATFVKLFDFIKLFPHYFLGSNADLPIVGGSILSHDHFQGGHYTFAMEKAPIIQEFTVKGYEDVKAGIVKWPLSVIRLQCKDETRLIDLATNILDKWRNYTDEEAYIFAETDGEPHNTITPIARKRGDYFELDPLESTCRHASLALAVVLQRRDW.

Belongs to the galactose-1-phosphate uridylyltransferase type 2 family.

The protein localises to the cytoplasm. It carries out the reaction alpha-D-galactose 1-phosphate + UDP-alpha-D-glucose = alpha-D-glucose 1-phosphate + UDP-alpha-D-galactose. It participates in carbohydrate metabolism; galactose metabolism. The polypeptide is Galactose-1-phosphate uridylyltransferase (galT) (Butyrivibrio fibrisolvens).